Consider the following 374-residue polypeptide: Translocating chain-associated membrane protein 1 (374 aa).

Topologically, residues 1-29 (MAIRKKSTKSPPVLSHEFVLQNHADIVSC) are cytoplasmic. The chain crosses the membrane as a helical span at residues 30 to 50 (VAMVFLLGLMFEITAKASIIF). Topologically, residues 51–76 (VTLQYNVTLPATEEQATESVSLYYYG) are lumenal. Asparagine 56 carries an N-linked (GlcNAc...) asparagine glycan. A helical membrane pass occupies residues 77-97 (IKDLATVFFYMLVAIIIHAVI). At 98–121 (QEYMLDKINRRMHFSKTKHSKFNE) the chain is on the cytoplasmic side. The TLC domain occupies 117–326 (SKFNESGQLS…NFQLRRWREH (210 aa)). The chain crosses the membrane as a helical span at residues 122–142 (SGQLSAFYLFACVWGTFILIS). Residues 143 to 159 (ENYISDPTILWRAYPHN) lie on the Lumenal side of the membrane. Residues 160–180 (LMTFQMKFFYISQLAYWLHAF) traverse the membrane as a helical segment. Topologically, residues 181–192 (PELYFQKTKKED) are cytoplasmic. A helical membrane pass occupies residues 193-213 (IPRQLVYIGLYLFHIAGAYLL). The Lumenal portion of the chain corresponds to 214 to 217 (NLNH). The chain crosses the membrane as a helical span at residues 218-238 (LGLVLLVLHYFVEFLFHISRL). The Cytoplasmic segment spans residues 239-251 (FYFSNEKYQKGFS). A helical membrane pass occupies residues 252–272 (LWAVLFVLGRLLTLILSVLTV). The Lumenal segment spans residues 273–297 (GFGLARAENQKLDFSTGNFNVLAVR). Residues 298 to 318 (IAVLASICVTQAFMMWKFINF) form a helical membrane-spanning segment. Residues 319-374 (QLRRWREHSAFQAPAVKKKPTVTKGRSSKKGTENGVNGTLTSNVADSPRNKKEKSS) lie on the Cytoplasmic side of the membrane. The segment covering 334-347 (VKKKPTVTKGRSSK) has biased composition (basic residues). Residues 334–374 (VKKKPTVTKGRSSKKGTENGVNGTLTSNVADSPRNKKEKSS) form a disordered region. Positions 352–363 (NGVNGTLTSNVA) are enriched in polar residues. Serine 365 bears the Phosphoserine mark.

This sequence belongs to the TRAM family. Interacts with SEC61B. May interact with Derlin-1/DERL1. As to quaternary structure, (Microbial infection) Interacts with human cytomegalovirus/HHV-5 proteins US2 and US11. Post-translationally, N-glycosylated.

Its subcellular location is the endoplasmic reticulum membrane. Involved in the translocation of nascent protein chains into or through the endoplasmic reticulum (ER) membrane by facilitating the proper chain positioning at the SEC61 channel. Regulates the exposure of nascent secretory protein chain to the cytosol during translocation into the ER. May affect the phospholipid bilayer in the vicinity of the lateral gate of the SEC61 channel, thereby facilitating ER protein transport. Intimately associates with transmembrane (TM) domain of nascent membrane proteins during the entire integration process into the ER membrane. Associates with the second TM domain of G-protein-coupled receptor opsin/OPSD nascent chain in the ER membrane, which may facilitate its integration into the membrane. Under conditions of ER stress, participates in the disposal of misfolded ER membrane proteins during the unfolded protein response (UPR), an integrated stress response (ISR) pathway, by selectively retrotranslocating misfolded ER-membrane proteins from the ER into the cytosol where they are ubiquitinated and degraded by the proteasome. Functionally, (Microbial infection) In case of cytomegalovirus infection, participates in US2- and US11-mediated ER-to-cytosol retrotranslocation and subsequent degradation of major histocompatibility complex (MHC) class I heavy chains, thereby decreasing the immune detection by cytotoxic T-cells. In Homo sapiens (Human), this protein is Translocating chain-associated membrane protein 1.